The sequence spans 285 residues: Acetyl-coenzyme A carboxylase carboxyl transferase subunit beta (285 aa).

The region spanning 29 to 285 is the CoA carboxyltransferase N-terminal domain; that stretch reads IMTKCPKCKK…ILKIHQEVTK (257 aa). Zn(2+) contacts are provided by C33, C36, C52, and C55. A C4-type zinc finger spans residues 33–55; it reads CPKCKKIMYTKELAENLNVCFNC.

Belongs to the AccD/PCCB family. In terms of assembly, acetyl-CoA carboxylase is a heterohexamer composed of biotin carboxyl carrier protein (AccB), biotin carboxylase (AccC) and two subunits each of ACCase subunit alpha (AccA) and ACCase subunit beta (AccD). Zn(2+) serves as cofactor.

Its subcellular location is the cytoplasm. It carries out the reaction N(6)-carboxybiotinyl-L-lysyl-[protein] + acetyl-CoA = N(6)-biotinyl-L-lysyl-[protein] + malonyl-CoA. It participates in lipid metabolism; malonyl-CoA biosynthesis; malonyl-CoA from acetyl-CoA: step 1/1. Its function is as follows. Component of the acetyl coenzyme A carboxylase (ACC) complex. Biotin carboxylase (BC) catalyzes the carboxylation of biotin on its carrier protein (BCCP) and then the CO(2) group is transferred by the transcarboxylase to acetyl-CoA to form malonyl-CoA. The polypeptide is Acetyl-coenzyme A carboxylase carboxyl transferase subunit beta (Staphylococcus aureus (strain MSSA476)).